Reading from the N-terminus, the 2367-residue chain is Probable G-protein coupled receptor 179 (2367 aa).

The N-terminal stretch at 1–25 (MGTRGAVMPPPMWGLLGCCFVCAWA) is a signal peptide. Residues 26-381 (LGGPRPIRSL…CLVEEAAVLR (356 aa)) are Extracellular-facing. Residues 62-245 (YLYSGDAQQL…CQEGRLRPGW (184 aa)) form a cache-like region region. Asn75 is a glycosylation site (N-linked (GlcNAc...) asparagine). Cys76 and Cys236 are joined by a disulfide. A glycan (N-linked (GlcNAc...) asparagine) is linked at Asn298. The chain crosses the membrane as a helical span at residues 382 to 402 (AAVLACQACCMLAIFLSMLVS). Topologically, residues 403 to 415 (YRCRRNKRIWASG) are cytoplasmic. The helical transmembrane segment at 416 to 436 (VVLLETVLFGFLLLYFPVFIL) threads the bilayer. Residues 437 to 444 (YFKPSVFR) are Extracellular-facing. Residues 445–465 (CIALRWVRLLGFAIVYGTIIL) form a helical membrane-spanning segment. Cys445 and Cys537 form a disulfide bridge. The Cytoplasmic portion of the chain corresponds to 466–493 (KLYRVLQLFLSRTAQRSALLSSGRLLRR). A helical transmembrane segment spans residues 494–514 (LGLLLLPVLGFLAVWTVGALE). Residues 515 to 543 (RGIQHAPLVIRGHTPSGRHFYLCHHDRWD) are Extracellular-facing. The helical transmembrane segment at 544–564 (YIMVVAELLLLCWGSFLCYAT) threads the bilayer. Residues 565–575 (RAVLSAFHEPR) are Cytoplasmic-facing. A helical transmembrane segment spans residues 576–594 (YMGIALHNELLLSAAFHTA). The Extracellular segment spans residues 595–607 (RFVLVPSLHPDWT). A helical membrane pass occupies residues 608 to 628 (LLLFFFHTHSTVTTTLALIFI). The Cytoplasmic portion of the chain corresponds to 629 to 2367 (PKFWKLGAPP…PPTVYPWDWE (1739 aa)). 12 disordered regions span residues 731 to 818 (ARQH…FRSA), 869 to 932 (REER…PHPP), 1039 to 1083 (KSRA…QQGS), 1098 to 1198 (RSTY…AGKT), 1247 to 1431 (EVTE…CPWE), 1537 to 1557 (PRESTVPGHSSPCLDNSSSKA), 1577 to 1672 (DLRP…ERPQ), 1723 to 1757 (AIRKSPNDTGKVSADLGPRERAVTAPEKPQKPTPE), 1823 to 1852 (SEGTTGKGLDQKAGSESAEQREKALEKGRL), 1886 to 2108 (AQAP…GSVE), 2133 to 2212 (WEAG…KEAG), and 2308 to 2367 (GVRE…WDWE). Residues 738–759 (SGSPGHGSLPGSSRRRLLSSSL) are compositionally biased toward low complexity. A compositionally biased stretch (basic and acidic residues) spans 773–782 (STYDQRREQD). Positions 1039–1067 (KSRAGENEMDAEDAHHQREANDVDEDRPK) are enriched in basic and acidic residues. Residues 1153-1164 (LQNQQNAHTSRM) are compositionally biased toward polar residues. Composition is skewed to basic and acidic residues over residues 1171 to 1181 (EGSREQEDRGR), 1277 to 1299 (RALRQDPGDSQKKRGEARGKSEP), 1341 to 1362 (GRIRDKSEAGDSVEARKVEKPG), and 1390 to 1407 (EDGKPAQEAVKDLPQEKQ). Residues 1615-1639 (ESQKDKEKMPGKSEIEDVTAWEKPE) show a composition bias toward basic and acidic residues. Composition is skewed to basic and acidic residues over residues 1840–1851 (AEQREKALEKGR), 1903–1920 (AEGHSLEATEKGDLRQDP), 1970–1979 (SHLDRQRPDQ), 2023–2054 (VTERIPVKGVSRQDGKGDSQEEKGRAPEKSEP), 2061–2070 (KKPEMADFRQ), and 2165–2180 (TEEHFSKAAAKPREQE). Low complexity predominate over residues 2326 to 2340 (PEPSLQEAESQSSSL).

It belongs to the G-protein coupled receptor 3 family. As to quaternary structure, homodimer. Associates with the R7 group RGS-GNB5 complexes, composed of an R7 group RGS subunit (RGS6, RGS7, RGS9 or RGS11) and GNB5, promoting their localization to the cell membrane and regulating the GTPase activator activity of R7 RGS proteins. Interacts with TRPM1. Interacts with GRM6. Interacts with EGFLAM; transsynaptic interaction is required for synaptic organization of photoreceptor cells. As to expression, expressed in the retina.

The protein localises to the cell membrane. It is found in the postsynaptic cell membrane. Its subcellular location is the cell projection. It localises to the dendrite. Its function is as follows. Orphan receptor involved in vision. Required for signal transduction through retinal depolarizing bipolar cells. Acts as an atypical G-protein coupled receptor that recruits and regulates the R7 group RGS-GNB5 complexes instead of activating G proteins: promotes the GTPase activator activity of R7 RGS proteins, increasing the GTPase activity of G protein alpha subunits, thereby driving them into their inactive GDP-bound form. Associates with components of metabotropic signaling cascade in retina ON-bipolar neurons, such as TRPM1 and GRM6: may control the ability of the GRM6 cascade to gate TRPM1. This Homo sapiens (Human) protein is Probable G-protein coupled receptor 179.